Reading from the N-terminus, the 439-residue chain is Protein PHYTOCHROME KINASE SUBSTRATE 1 (439 aa).

A compositionally biased stretch (polar residues) spans 1-14; it reads MVTLTPSSASTPKT. Disordered regions lie at residues 1–22, 54–80, and 100–139; these read MVTLTPSSASTPKTSFDFMKNN, KTLNMSINPKQEEFGDEKKMVKKAPED, and QGSSVLSLTNPEVERTVVDSKQSAKKSTGTPSVRSESSWN. Residues 63–79 show a composition bias toward basic and acidic residues; it reads KQEEFGDEKKMVKKAPE. Composition is skewed to polar residues over residues 100-109 and 118-139; these read QGSSVLSLTN and DSKQSAKKSTGTPSVRSESSWN. Ser238 and Ser244 each carry phosphoserine. Disordered stretches follow at residues 259 to 311 and 355 to 439; these read LPLP…PTCY and TAKS…LYSQ. The span at 412–421 shows a compositional bias: basic and acidic residues; sequence TKPKSFETRR. The segment covering 424–439 has biased composition (low complexity); that stretch reads SNSSISHTQSSLLYSQ.

The protein belongs to the PKS family. Interacts with PKS2, RPT3, PHOT1, PHOT2 and the C-termini of both phytochromes A (phyA) and B (phyB). Binds both spectral forms of phytochrome, Pr and Pfr. Phosphorylated on Ser and to a lower extent on Thr by phytochromes. Phosphorylation is stimulated twofold by red light. As to expression, expressed in young seedlings in both darkness and light. Moderate in leaves and very low in roots and flowers. Expressed in the elongation zone of the root and hypocotyl.

The protein resides in the cell membrane. In terms of biological role, may be responsible for light-regulated cytoplasmic sequestration of phytochromes or may be a negative regulator of phytochrome B signaling. Component of the network that modulates the very low-fluence response (VLFR) branch of phyA signaling. Acts positively in PHOT1 signaling. Regulates phytochrome-mediated photomorphogenesis and hypocotyl phototropism. Involved in the control of leaf flattening and leaf positioning. Promotes negative root phototropism and negatively regulates root gravitropism. May act by controlling auxin homeostasis. The polypeptide is Protein PHYTOCHROME KINASE SUBSTRATE 1 (PKS1) (Arabidopsis thaliana (Mouse-ear cress)).